Here is a 309-residue protein sequence, read N- to C-terminus: Homoserine O-succinyltransferase (309 aa).

Cys142 serves as the catalytic Acyl-thioester intermediate. Substrate is bound by residues Lys163 and Ser192. His235 (proton acceptor) is an active-site residue. The active site involves Glu237. Residue Arg249 coordinates substrate.

The protein belongs to the MetA family.

It is found in the cytoplasm. It catalyses the reaction L-homoserine + succinyl-CoA = O-succinyl-L-homoserine + CoA. It functions in the pathway amino-acid biosynthesis; L-methionine biosynthesis via de novo pathway; O-succinyl-L-homoserine from L-homoserine: step 1/1. Its function is as follows. Transfers a succinyl group from succinyl-CoA to L-homoserine, forming succinyl-L-homoserine. In Yersinia pseudotuberculosis serotype O:1b (strain IP 31758), this protein is Homoserine O-succinyltransferase.